A 526-amino-acid polypeptide reads, in one-letter code: Peptide chain release factor 3 (526 aa).

The region spanning 8-277 (NKRRTFAIIS…GLTQWAPAPQ (270 aa)) is the tr-type G domain. GTP-binding positions include 17–24 (SHPDAGKT), 85–89 (DTPGH), and 139–142 (NKLD).

Belongs to the TRAFAC class translation factor GTPase superfamily. Classic translation factor GTPase family. PrfC subfamily.

It is found in the cytoplasm. Functionally, increases the formation of ribosomal termination complexes and stimulates activities of RF-1 and RF-2. It binds guanine nucleotides and has strong preference for UGA stop codons. It may interact directly with the ribosome. The stimulation of RF-1 and RF-2 is significantly reduced by GTP and GDP, but not by GMP. The sequence is that of Peptide chain release factor 3 from Histophilus somni (strain 2336) (Haemophilus somnus).